The following is a 401-amino-acid chain: E3 ubiquitin-protein ligase NHLRC1 (401 aa).

The RING-type zinc-finger motif lies at 28–74; it reads CKVCFERFGHWQQRRPRNLPCGHVVCLACVAALAHPRTLGLECPFCR. NHL repeat units follow at residues 115-159, 163-206, 207-247, 250-303, 304-352, and 353-396; these read TLTC…FDSG, AHQF…FDFF, GQIK…LEAD, EGVL…FNST, MQLI…LGKP, and EEFP…FKVM.

In terms of assembly, interacts with AGL. Interacts (via the NHL repeats) with EPM2A/laforin. Forms a complex with EPM2A/laforin and HSP70. Interacts with PRDM8.

It is found in the endoplasmic reticulum. The protein resides in the nucleus. The enzyme catalyses S-ubiquitinyl-[E2 ubiquitin-conjugating enzyme]-L-cysteine + [acceptor protein]-L-lysine = [E2 ubiquitin-conjugating enzyme]-L-cysteine + N(6)-ubiquitinyl-[acceptor protein]-L-lysine.. The protein operates within protein modification; protein ubiquitination. Functionally, E3 ubiquitin-protein ligase. Together with the phosphatase EPM2A/laforin, appears to be involved in the clearance of toxic polyglucosan and protein aggregates via multiple pathways. In complex with EPM2A/laforin and HSP70, suppresses the cellular toxicity of misfolded proteins by promoting their degradation through the ubiquitin-proteasome system (UPS). Ubiquitinates the glycogen-targeting protein phosphatase subunits PPP1R3C/PTG and PPP1R3D in a laforin-dependent manner and targets them for proteasome-dependent degradation, thus decreasing glycogen accumulation. Polyubiquitinates EPM2A/laforin and ubiquitinates AGL and targets them for proteasome-dependent degradation. Also promotes proteasome-independent protein degradation through the macroautophagy pathway. The chain is E3 ubiquitin-protein ligase NHLRC1 (Nhlrc1) from Mus musculus (Mouse).